A 794-amino-acid polypeptide reads, in one-letter code: Ubiquitin carboxyl-terminal hydrolase 10 (794 aa).

A2 bears the N-acetylalanine mark. An interaction with p53/TP53 region spans residues 2–99 (ALHNPQYIFG…ILGCPTSKKT (98 aa)). The G3BP1-binding stretch occupies residues 6-21 (PQYIFGDFSPDEFNQF). T24 and T99 each carry phosphothreonine. The tract at residues 123–164 (ESSSNAEAETLENDSGAGGLGQRERKKKKKRPPGYYSYLKDG) is disordered. S209, S224, and S316 each carry phosphoserine. Residues 303–326 (ESADLDPAKPESQSPPAESALSVS) are disordered. Residues 313-326 (ESQSPPAESALSVS) show a composition bias toward polar residues. S332 is subject to Phosphoserine; by ATM. S361 and S366 each carry phosphoserine. The USP domain occupies 411–791 (RGLINKGNWC…TAYLLYYRRV (381 aa)). The active-site Nucleophile is the C420. At S543 the chain carries Phosphoserine. The disordered stretch occupies residues 546–588 (HEKHSVSNGPGSHLIEDEELEDTGEGSEDEWEQVGPKNKTSVT). Residues 561 to 577 (EDEELEDTGEGSEDEWE) show a composition bias toward acidic residues. Position 568 is a phosphothreonine (T568). Position 572 is a phosphoserine (S572). The active-site Proton acceptor is H745.

It belongs to the peptidase C19 family. USP10 subfamily. In terms of assembly, found in a deubiquitination complex with TANK, USP10 and ZC3H12A; this complex inhibits genotoxic stress- or interleukin-1-beta (IL1B)-mediated NF-kappa-B activation by promoting IKBKG or TRAF6 deubiquitination. Interacts with IKBKG; this interaction increases in response to DNA damage. Interacts with TANK; this interaction increases in response to DNA damage. Interacts with TRAF6; this interaction increases in response to DNA damage. Interacts with ZC3H12A; this interaction increases in response to DNA damage. Interacts with G3BP1 (via NTF2 domain) and G3BP2 (via NTF2 domain); inhibiting stress granule formation. Post-translationally, phosphorylated by ATM following DNA damage, leading to stabilization and translocation it to the nucleus. Ubiquitinated. Deubiquitinated by USP13.

Its subcellular location is the cytoplasm. The protein resides in the nucleus. The protein localises to the early endosome. The catalysed reaction is Thiol-dependent hydrolysis of ester, thioester, amide, peptide and isopeptide bonds formed by the C-terminal Gly of ubiquitin (a 76-residue protein attached to proteins as an intracellular targeting signal).. With respect to regulation, specifically inhibited by spautin-1 (specific and potent autophagy inhibitor-1), a derivative of MBCQ that binds to USP10 and inhibits deubiquitinase activity. Regulated by PIK3C3/VPS34-containing complexes. In terms of biological role, hydrolase that can remove conjugated ubiquitin from target proteins such as p53/TP53, RPS2/us5, RPS3/us3, RPS10/eS10, BECN1, SNX3 and CFTR. Acts as an essential regulator of p53/TP53 stability: in unstressed cells, specifically deubiquitinates p53/TP53 in the cytoplasm, leading to counteract MDM2 action and stabilize p53/TP53. Following DNA damage, translocates to the nucleus and deubiquitinates p53/TP53, leading to regulate the p53/TP53-dependent DNA damage response. Component of a regulatory loop that controls autophagy and p53/TP53 levels: mediates deubiquitination of BECN1, a key regulator of autophagy, leading to stabilize the PIK3C3/VPS34-containing complexes. In turn, PIK3C3/VPS34-containing complexes regulate USP10 stability, suggesting the existence of a regulatory system by which PIK3C3/VPS34-containing complexes regulate p53/TP53 protein levels via USP10 and USP13. Does not deubiquitinate MDM2. Plays a key role in 40S ribosome subunit recycling when a ribosome has stalled during translation: acts both by inhibiting formation of stress granules, which store stalled translation pre-initiation complexes, and mediating deubiquitination of 40S ribosome subunits. Acts as a negative regulator of stress granules formation by lowering G3BP1 and G3BP2 valence, thereby preventing G3BP1 and G3BP2 ability to undergo liquid-liquid phase separation (LLPS) and assembly of stress granules. Promotes 40S ribosome subunit recycling following ribosome dissociation in response to ribosome stalling by mediating deubiquitination of 40S ribosomal proteins RPS2/us5, RPS3/us3 and RPS10/eS10, thereby preventing their degradation by the proteasome. Part of a ribosome quality control that takes place when ribosomes have stalled during translation initiation (iRQC): USP10 acts by removing monoubiquitination of RPS2/us5 and RPS3/us3, promoting 40S ribosomal subunit recycling. Deubiquitinates CFTR in early endosomes, enhancing its endocytic recycling. Involved in a TANK-dependent negative feedback response to attenuate NF-kappa-B activation via deubiquitinating IKBKG or TRAF6 in response to interleukin-1-beta (IL1B) stimulation or upon DNA damage. Deubiquitinates TBX21 leading to its stabilization. Plays a negative role in the RLR signaling pathway upon RNA virus infection by blocking the RIGI-mediated MAVS activation. Mechanistically, removes the unanchored 'Lys-63'-linked polyubiquitin chains of MAVS to inhibit its aggregation, essential for its activation. In Rattus norvegicus (Rat), this protein is Ubiquitin carboxyl-terminal hydrolase 10 (Usp10).